The sequence spans 753 residues: Rsm22-cox11 tandem protein 2, mitochondrial (753 aa).

Residues 1 to 39 constitute a mitochondrion transit peptide; it reads MPILTCRYKILFLYNLRNCFTFQNQRCLIPYGTTTTIRW. [4Fe-4S] cluster-binding residues include cysteine 323, cysteine 329, cysteine 342, and cysteine 430. Residues 571–591 form a helical membrane-spanning segment; sequence IYYLVAISIFALGLTYAAVPL. The Mitochondrial intermembrane portion of the chain corresponds to 592-753; that stretch reads YRLFCSKTGY…TNGNLLTKLN (162 aa).

In the N-terminal section; belongs to the methyltransferase superfamily. Rsm22 family. The protein in the C-terminal section; belongs to the COX11/CtaG family. Associates with the mitochondrial ribosome (mitoribosome). Only transiently interacts with the mitoribosome. Specific enzymatic cleavages in vivo by mitochondrial processing peptidase (MPP) yield mature proteins including rsm22-2 and cox11-2.

Its subcellular location is the mitochondrion. The protein localises to the mitochondrion inner membrane. In terms of biological role, mitochondrial ribosome (mitoribosome) assembly factor. Binds at the interface of the head and body domains of the mitochondrial small ribosomal subunit (mt-SSU), occluding the mRNA channel and preventing compaction of the head domain towards the body. Probable inactive methyltransferase: retains the characteristic folding and ability to bind S-adenosyl-L-methionine, but it probably lost its methyltransferase activity. Functionally, exerts its effect at some terminal stage of cytochrome c oxidase synthesis, probably by being involved in the insertion of the copper B into subunit I. This Schizosaccharomyces pombe (strain 972 / ATCC 24843) (Fission yeast) protein is Rsm22-cox11 tandem protein 2, mitochondrial (cox1102).